The chain runs to 312 residues: Olfactory receptor 1D2 (312 aa).

Residues 1-25 lie on the Extracellular side of the membrane; sequence MDGGNQSEGSEFLLLGMSESPEQQR. The N-linked (GlcNAc...) asparagine glycan is linked to Asn5. Residues 26-49 form a helical membrane-spanning segment; it reads ILFWMFLSMYLVTVVGNVLIILAI. Topologically, residues 50 to 57 are cytoplasmic; that stretch reads SSDSRLHT. Residues 58–79 form a helical membrane-spanning segment; that stretch reads PVYFFLANLSFTDLFFVTNTIP. The Extracellular portion of the chain corresponds to 80–100; sequence KMLVNLQSHNKAISYAGCLTQ. Cys97 and Cys189 form a disulfide bridge. The chain crosses the membrane as a helical span at residues 101–120; sequence LYFLVSLVALDNLILAVMAY. The Cytoplasmic portion of the chain corresponds to 121–139; it reads DRYVAICCPLHYTTAMSPK. A helical membrane pass occupies residues 140–158; sequence LCILLLSLCWVLSVLYGLI. Topologically, residues 159–196 are extracellular; sequence HTLLMTRVTFCGSRKIHYIFCEMYVLLRMACSNIQINH. The N-linked (GlcNAc...) asparagine glycan is linked to Asn195. The chain crosses the membrane as a helical span at residues 197 to 219; sequence TVLIATGCFIFLIPFGFVIISYV. Topologically, residues 220–236 are cytoplasmic; sequence LIIRAILRIPSVSKKYK. The chain crosses the membrane as a helical span at residues 237-259; that stretch reads AFSTCASHLGAVSLFYGTLCMVY. Over 260–271 the chain is Extracellular; it reads LKPLHTYSVKDS. Residues 272–291 form a helical membrane-spanning segment; it reads VATVMYAVVTPMMNPFIYSL. The Cytoplasmic segment spans residues 292–312; sequence RNKDMHGALGRLLDKHFKRLT.

It belongs to the G-protein coupled receptor 1 family. As to expression, expressed in testis. Expressed in spermatozoa (at protein level). Expressed in olfactory epithelium.

The protein localises to the cell membrane. In terms of biological role, odorant receptor which may be involved in sperm chemotaxis. Bourgeonal is a strong chemoattractant for sperm in vitro and is shown to be a strong agonist for OR1D2 in vitro. May also function in olfactory reception. The protein is Olfactory receptor 1D2 (OR1D2) of Homo sapiens (Human).